Reading from the N-terminus, the 336-residue chain is UPF0324 membrane protein lp_2841 (336 aa).

Helical transmembrane passes span 5–22 (GILP…ISQG), 26–48 (FVPA…NTFL), 84–106 (IGGF…ALWL), 116–138 (VRML…IAPV), 150–172 (ITLV…MAVF), 204–226 (TVQF…VLIF), 255–277 (WYVA…AIIG), 282–304 (TISS…LVNF), and 311–333 (LALY…ITLL).

This sequence belongs to the UPF0324 family.

Its subcellular location is the cell membrane. The polypeptide is UPF0324 membrane protein lp_2841 (Lactiplantibacillus plantarum (strain ATCC BAA-793 / NCIMB 8826 / WCFS1) (Lactobacillus plantarum)).